The chain runs to 109 residues: Spermidine export protein MdtI (109 aa).

4 consecutive transmembrane segments (helical) span residues Trp-6–Leu-26, Ile-36–Val-56, Ala-64–Phe-84, and Leu-88–Leu-108.

The protein belongs to the drug/metabolite transporter (DMT) superfamily. Small multidrug resistance (SMR) (TC 2.A.7.1) family. MdtI subfamily. In terms of assembly, forms a complex with MdtJ.

Its subcellular location is the cell inner membrane. Its function is as follows. Catalyzes the excretion of spermidine. This Escherichia coli O81 (strain ED1a) protein is Spermidine export protein MdtI.